Reading from the N-terminus, the 96-residue chain is Large ribosomal subunit protein uL23 (96 aa).

It belongs to the universal ribosomal protein uL23 family. In terms of assembly, part of the 50S ribosomal subunit. Contacts protein L29, and trigger factor when it is bound to the ribosome.

Functionally, one of the early assembly proteins it binds 23S rRNA. One of the proteins that surrounds the polypeptide exit tunnel on the outside of the ribosome. Forms the main docking site for trigger factor binding to the ribosome. This is Large ribosomal subunit protein uL23 from Nitratidesulfovibrio vulgaris (strain ATCC 29579 / DSM 644 / CCUG 34227 / NCIMB 8303 / VKM B-1760 / Hildenborough) (Desulfovibrio vulgaris).